Reading from the N-terminus, the 238-residue chain is MDRPAYRRVVVKLSGEYLAGSQPFGIDQPTIDRIAGDLAEARALGVEIAVVVGGGNIFRGVEVSSRGVSRPTGDTMGMLATVMNCLALEAALERRGQSARALSSFVMPEVCELFTRRAAHKYLAEDRIVLLAGGTGNPYFTTDTTAVLRAAEIGAQAVLKATNVDGVYSSDPKKDPSAKRFERLSHSQALEGGYKVMDATAFALARETALPIIVFSIAEPGSIGAILKGTGRGTIVAS.

ATP is bound at residue 12 to 15; it reads KLSG. Residue Gly-54 coordinates UMP. Positions 55 and 59 each coordinate ATP. Residues Asp-74 and 135 to 142 each bind UMP; that span reads TGNPYFTT. 4 residues coordinate ATP: Thr-162, Asn-163, Tyr-168, and Asp-171.

Belongs to the UMP kinase family. Homohexamer.

It localises to the cytoplasm. The enzyme catalyses UMP + ATP = UDP + ADP. It participates in pyrimidine metabolism; CTP biosynthesis via de novo pathway; UDP from UMP (UMPK route): step 1/1. Inhibited by UTP. Functionally, catalyzes the reversible phosphorylation of UMP to UDP. This Nitrobacter winogradskyi (strain ATCC 25391 / DSM 10237 / CIP 104748 / NCIMB 11846 / Nb-255) protein is Uridylate kinase.